A 55-amino-acid chain; its full sequence is Conotoxin Cal22b (55 aa).

The propeptide occupies 1 to 5; the sequence is GRPSA.

In terms of processing, contains 4 disulfide bonds. Expressed by the venom duct.

The protein resides in the secreted. Probable neurotoxin with unknown target. Possibly targets ion channels. In Californiconus californicus (California cone), this protein is Conotoxin Cal22b.